We begin with the raw amino-acid sequence, 361 residues long: Velvet complex subunit B (361 aa).

Disordered stretches follow at residues methionine 1–glutamine 36 and asparagine 308–arginine 340. Residues proline 23 to arginine 35 show a composition bias toward polar residues. Positions glutamine 47–serine 353 constitute a Velvet domain. Positions serine 323–proline 336 are enriched in low complexity.

This sequence belongs to the velvet family. VelB subfamily. As to quaternary structure, component of the heterotrimeric velvet complex composed of laeA, veA and velB; VeA acting as a bridging protein between laeA and velB. Interacts with velA. Forms a heterodimeric complex with vosA; the formation of the velB-vosA complex is light-dependent. Interacts with vosA.

The protein resides in the nucleus. Its subcellular location is the cytoplasm. In terms of biological role, component of the velvet transcription factor complex that controls sexual/asexual developmental ratio in response to light, promoting sexual development in the darkness while stimulating asexual sporulation under illumination. The velvet complex acts as a global regulator for secondary metabolite gene expression. Component of the velB-VosA heterodimeric complex that plays a dual role in activating genes associated with spore maturation and repressing certain development-associated genes. The velB-VosA complex binds DNA through the DNA-binding domain of vosA that recognizes an 11-nucleotide consensus sequence 5'-CTGGCCGCGGC-3' consisting of two motifs in the promoters of key developmental regulatory genes. Controls conidiophore formation. The sequence is that of Velvet complex subunit B from Penicillium rubens (strain ATCC 28089 / DSM 1075 / NRRL 1951 / Wisconsin 54-1255) (Penicillium chrysogenum).